The primary structure comprises 417 residues: Multifunctional CCA protein (417 aa).

Gly-8 and Arg-11 together coordinate ATP. Gly-8 and Arg-11 together coordinate CTP. 2 residues coordinate Mg(2+): Asp-21 and Asp-23. Residues Arg-91, Arg-137, and Arg-140 each coordinate ATP. CTP contacts are provided by Arg-91, Arg-137, and Arg-140. The HD domain occupies 225-326; that stretch reads SGIHTLMTLQ…LNVLKKTDAF (102 aa).

This sequence belongs to the tRNA nucleotidyltransferase/poly(A) polymerase family. Bacterial CCA-adding enzyme type 1 subfamily. As to quaternary structure, monomer. Can also form homodimers and oligomers. It depends on Mg(2+) as a cofactor. The cofactor is Ni(2+).

The catalysed reaction is a tRNA precursor + 2 CTP + ATP = a tRNA with a 3' CCA end + 3 diphosphate. The enzyme catalyses a tRNA with a 3' CCA end + 2 CTP + ATP = a tRNA with a 3' CCACCA end + 3 diphosphate. Functionally, catalyzes the addition and repair of the essential 3'-terminal CCA sequence in tRNAs without using a nucleic acid template. Adds these three nucleotides in the order of C, C, and A to the tRNA nucleotide-73, using CTP and ATP as substrates and producing inorganic pyrophosphate. tRNA 3'-terminal CCA addition is required both for tRNA processing and repair. Also involved in tRNA surveillance by mediating tandem CCA addition to generate a CCACCA at the 3' terminus of unstable tRNAs. While stable tRNAs receive only 3'-terminal CCA, unstable tRNAs are marked with CCACCA and rapidly degraded. The protein is Multifunctional CCA protein of Neisseria meningitidis serogroup A / serotype 4A (strain DSM 15465 / Z2491).